Reading from the N-terminus, the 598-residue chain is MKNIRNFSIIAHIDHGKSTLSDRLIQTCGGLSDREMEAQVLDSMDLERERGITIKAQSVTLNYKAKDGETYQLNFIDTPGHVDFSYEVSRSLAACEGALLVVDAGQGVEAQTLANCYTAIEMDLEVVPILNKIDLPAADPERVAEEIEDIVGIDAMEAVRCSAKTGVGIEDVLEEIVAKIPAPEGDPNAPLQALIIDSWFDNYLGVVSLVRIKNGVLRKGDKIKVMSTGQTYNVDRLGIFTPKQEDTTVLECGEVGWVVCAIKDILGAPVGDTLTHQHNSATEVLPGFKKVKPQVYAGLFPVSSDDYEAFRDALGKLSLNDASLFYEPETSTALGFGFRCGFLGLLHMEIIQERLEREYDLDLITTAPTVIYEVQLTNGEVVYVDSPAKLPPLNNIAEIREPIAECNMLVPQEYLGNVITLCVEKRGVQTNMVYHGNQIALTYEIPMGEVVLDFFDRLKSTSRGYASLDYGFKRFQAADMVRVDIMINSERVDALALIVHKDNSQYRGRELVEKMRELIPRQQFDIAIQAAIGNHIIARSTVKQLRKNVLAKCYGGDVSRKKKLLQKQKEGKKRMKSLGNVEVPQEAFLAILHVGKDK.

Positions 2 to 184 constitute a tr-type G domain; it reads KNIRNFSIIA…EIVAKIPAPE (183 aa). GTP is bound by residues 14–19 and 131–134; these read DHGKST and NKID.

It belongs to the TRAFAC class translation factor GTPase superfamily. Classic translation factor GTPase family. LepA subfamily.

The protein localises to the cell inner membrane. It catalyses the reaction GTP + H2O = GDP + phosphate + H(+). Its function is as follows. Required for accurate and efficient protein synthesis under certain stress conditions. May act as a fidelity factor of the translation reaction, by catalyzing a one-codon backward translocation of tRNAs on improperly translocated ribosomes. Back-translocation proceeds from a post-translocation (POST) complex to a pre-translocation (PRE) complex, thus giving elongation factor G a second chance to translocate the tRNAs correctly. Binds to ribosomes in a GTP-dependent manner. This is Elongation factor 4 from Haemophilus influenzae (strain 86-028NP).